Here is a 116-residue protein sequence, read N- to C-terminus: Thioredoxin (116 aa).

Residues 2–113 (TDSEKSATIK…LLRELSDVVP (112 aa)) enclose the Thioredoxin domain. A disulfide bond links C37 and C40.

This sequence belongs to the thioredoxin family.

Participates in various redox reactions through the reversible oxidation of its active center dithiol to a disulfide and catalyzes dithiol-disulfide exchange reactions. The protein is Thioredoxin (trxA) of Mycobacterium bovis (strain ATCC BAA-935 / AF2122/97).